An 827-amino-acid polypeptide reads, in one-letter code: Transcription factor SOX-6 (827 aa).

Residues 1-10 show a composition bias toward polar residues; it reads MSSKQATSPF. Residues 1 to 51 form a disordered region; it reads MSSKQATSPFACTADGEEAMTQDLTSREKEEGSDQHPASHLPLHPIMHNKP. Over residues 25-34 the composition is skewed to basic and acidic residues; it reads TSREKEEGSD. At Thr-119 the chain carries Phosphothreonine. Positions 184-262 form a coiled coil; that stretch reads LAEKERQLST…LLQQQIQVQG (79 aa). 2 disordered regions span residues 334–361 and 379–470; these read QINPRLKGISDRFGRNLDPSEHGGGHSY and VSPG…PIGG. Basic and acidic residues predominate over residues 341–357; that stretch reads GISDRFGRNLDPSEHGG. Ser-399 is modified (phosphoserine). Thr-401 bears the Phosphothreonine mark. Residues Lys-404 and Lys-417 each participate in a glycyl lysine isopeptide (Lys-Gly) (interchain with G-Cter in SUMO) cross-link. Composition is skewed to polar residues over residues 421-431 and 439-461; these read TAQPLNLSSRP and SPTSPTQNLFPASKTSPVNLPNK. Residues Ser-439 and Ser-442 each carry the phosphoserine modification. A DNA-binding region (HMG box) is located at residues 620 to 688; the sequence is IKRPMNAFMV…IHLEKYPNYK (69 aa). Disordered stretches follow at residues 752–772 and 786–827; these read TPSPQMTSDCSSTSASPEPSL and ASLA…VSAN. Acidic residues predominate over residues 795 to 808; the sequence is NGEDEMEAYDDYED.

As to quaternary structure, homodimer. Interacts with DAZAP2. May interact with CENPK. Sumoylation inhibits the transcriptional activity. Highly expressed in testis.

The protein resides in the nucleus. It localises to the cytoplasm. Functionally, transcription factor that plays a key role in several developmental processes, including neurogenesis, chondrocytes differentiation and cartilage formation. Specifically binds the 5'-AACAAT-3' DNA motif present in enhancers and super-enhancers and promotes expression of genes important for chondrogenesis. Required for overt chondrogenesis when condensed prechondrocytes differentiate into early stage chondrocytes: SOX5 and SOX6 cooperatively bind with SOX9 on active enhancers and super-enhancers associated with cartilage-specific genes, and thereby potentiate SOX9's ability to transactivate. Not involved in precartilaginous condensation, the first step in chondrogenesis, during which skeletal progenitors differentiate into prechondrocytes. Together with SOX5, required to form and maintain a pool of highly proliferating chondroblasts between epiphyses and metaphyses, to form columnar chondroblasts, delay chondrocyte prehypertrophy but promote hypertrophy, and to delay terminal differentiation of chondrocytes on contact with ossification fronts. Binds to the proximal promoter region of the myelin protein MPZ gene, and is thereby involved in the differentiation of oligodendroglia in the developing spinal tube. Binds to the gene promoter of MBP and acts as a transcriptional repressor. This Mus musculus (Mouse) protein is Transcription factor SOX-6.